The primary structure comprises 239 residues: Purine nucleoside phosphorylase DeoD-type (239 aa).

His5 lines the a purine D-ribonucleoside pocket. Phosphate contacts are provided by residues Gly21, Arg25, Arg44, and 88–91; that span reads RVGS. Residues 180-182 and 204-205 each bind a purine D-ribonucleoside; these read EME and SD. Asp205 serves as the catalytic Proton donor.

This sequence belongs to the PNP/UDP phosphorylase family. As to quaternary structure, homohexamer; trimer of homodimers.

The enzyme catalyses a purine D-ribonucleoside + phosphate = a purine nucleobase + alpha-D-ribose 1-phosphate. The catalysed reaction is a purine 2'-deoxy-D-ribonucleoside + phosphate = a purine nucleobase + 2-deoxy-alpha-D-ribose 1-phosphate. Catalyzes the reversible phosphorolytic breakdown of the N-glycosidic bond in the beta-(deoxy)ribonucleoside molecules, with the formation of the corresponding free purine bases and pentose-1-phosphate. In Citrobacter koseri (strain ATCC BAA-895 / CDC 4225-83 / SGSC4696), this protein is Purine nucleoside phosphorylase DeoD-type.